The sequence spans 1353 residues: Stress response protein NST1 (1353 aa).

Over residues 1–12 (MSSKSQQPPTGL) the composition is skewed to polar residues. Disordered stretches follow at residues 1 to 66 (MSSK…FFNF), 216 to 422 (NANA…TQSS), 503 to 522 (NGLRPPPSGAGPFPGSVEVD), 531 to 618 (DHRA…SFGS), 652 to 694 (RRSV…AEEG), 727 to 882 (LREL…AKET), 979 to 1119 (GLKS…DDAF), 1140 to 1276 (GSLI…GAGV), and 1308 to 1337 (GGTAGSGLVQGHVGGGGYSQGLFSPQHQQQ). The span at 16–25 (AAKKRAKKAA) shows a compositional bias: basic residues. A compositionally biased stretch (low complexity) spans 26–45 (KQSQNPQPQSAPQTSSQTPA). The span at 46–59 (SVPPLPPASVPDPL) shows a compositional bias: pro residues. A compositionally biased stretch (polar residues) spans 218 to 229 (NARSFPSPQQTI). A compositionally biased stretch (acidic residues) spans 242-254 (REEEYDDEEEIEE). Over residues 268-277 (KKNKKKKKKG) the composition is skewed to basic residues. Positions 287–300 (VEPPAPLPPLPPPS) are enriched in pro residues. Residues 317–330 (LPTHQPQPLSQQPP) are compositionally biased toward low complexity. Over residues 331–349 (SLNPLPPPAPASAPTPTPP) the composition is skewed to pro residues. The segment covering 368-388 (PARSARAAGKAPASAAPPHNA) has biased composition (low complexity). Residues 531 to 541 (DHRAPELHDHD) are compositionally biased toward basic and acidic residues. Positions 542-583 (PDDLDGEESEEYDDDDDYADDDELDDDDIGTDEADVGDEIDE) are enriched in acidic residues. Residues 654-665 (SVREEQNLRDMQ) show a composition bias toward basic and acidic residues. The segment covering 666–681 (EETDEEEEEEDDDESR) has biased composition (acidic residues). Composition is skewed to basic and acidic residues over residues 682 to 694 (DEPMTEKERAEEG), 727 to 750 (LRELEEEEDSKRAKEEKKAKEAQK), and 760 to 882 (QKAE…AKET). Residues 713–944 (AYRERVAKQR…AAQQAQRERA (232 aa)) adopt a coiled-coil conformation. The span at 1009-1021 (TNATPGRSMQKTP) shows a compositional bias: polar residues. Residues 1154–1165 (PTPPAPIAPPNL) are compositionally biased toward pro residues. Composition is skewed to polar residues over residues 1174 to 1187 (SDGQTSGPNVLRST) and 1209 to 1220 (QPQQRRPTTSWD).

It belongs to the NST1 family.

It localises to the cytoplasm. May act as a negative regulator of salt tolerance. The protein is Stress response protein NST1 (NST1) of Cryptococcus neoformans var. neoformans serotype D (strain B-3501A) (Filobasidiella neoformans).